The following is a 516-amino-acid chain: Bifunctional purine biosynthesis protein PurH (516 aa).

An MGS-like domain is found at 1–146 (MAPFALLSVS…KNHADVAVLT (146 aa)).

Belongs to the PurH family.

It carries out the reaction (6R)-10-formyltetrahydrofolate + 5-amino-1-(5-phospho-beta-D-ribosyl)imidazole-4-carboxamide = 5-formamido-1-(5-phospho-D-ribosyl)imidazole-4-carboxamide + (6S)-5,6,7,8-tetrahydrofolate. It catalyses the reaction IMP + H2O = 5-formamido-1-(5-phospho-D-ribosyl)imidazole-4-carboxamide. The protein operates within purine metabolism; IMP biosynthesis via de novo pathway; 5-formamido-1-(5-phospho-D-ribosyl)imidazole-4-carboxamide from 5-amino-1-(5-phospho-D-ribosyl)imidazole-4-carboxamide (10-formyl THF route): step 1/1. It functions in the pathway purine metabolism; IMP biosynthesis via de novo pathway; IMP from 5-formamido-1-(5-phospho-D-ribosyl)imidazole-4-carboxamide: step 1/1. The sequence is that of Bifunctional purine biosynthesis protein PurH from Parasynechococcus marenigrum (strain WH8102).